We begin with the raw amino-acid sequence, 208 residues long: CASP-like protein 2A1 (208 aa).

The Cytoplasmic portion of the chain corresponds to 1 to 36; that stretch reads MSKMAEQKAAAVDGLGGAGAADAAPAGEAAAARVRP. Residues 37–57 traverse the membrane as a helical segment; sequence VETLLRAAPLGLCVAAMTVML. Residues 58 to 78 are Extracellular-facing; that stretch reads RDQQSNEYGTVAYSDLGGFKY. Residues 79 to 99 form a helical membrane-spanning segment; that stretch reads LVYANGLCAAYSLVSAFYTAV. The Cytoplasmic portion of the chain corresponds to 100 to 108; it reads PRPATVSRS. Residues 109-129 traverse the membrane as a helical segment; it reads WVVFLLDQVFTYLILAAGAAA. The Extracellular segment spans residues 130–161; sequence AELLYLAYNGDKEVTWSEACGVFGSFCRQART. The helical transmembrane segment at 162-182 threads the bilayer; the sequence is SVAITFGTVLCFILLSLISSY. The Cytoplasmic portion of the chain corresponds to 183–208; that stretch reads RLFSAYEAPPSSALGSKGVEIAAYPR.

Belongs to the Casparian strip membrane proteins (CASP) family. As to quaternary structure, homodimer and heterodimers.

It is found in the cell membrane. This Sorghum bicolor (Sorghum) protein is CASP-like protein 2A1.